Here is a 394-residue protein sequence, read N- to C-terminus: NAD(P)H-quinone oxidoreductase subunit H (394 aa).

The protein belongs to the complex I 49 kDa subunit family. In terms of assembly, NDH-1 can be composed of about 15 different subunits; different subcomplexes with different compositions have been identified which probably have different functions.

Its subcellular location is the cellular thylakoid membrane. The enzyme catalyses a plastoquinone + NADH + (n+1) H(+)(in) = a plastoquinol + NAD(+) + n H(+)(out). The catalysed reaction is a plastoquinone + NADPH + (n+1) H(+)(in) = a plastoquinol + NADP(+) + n H(+)(out). Functionally, NDH-1 shuttles electrons from an unknown electron donor, via FMN and iron-sulfur (Fe-S) centers, to quinones in the respiratory and/or the photosynthetic chain. The immediate electron acceptor for the enzyme in this species is believed to be plastoquinone. Couples the redox reaction to proton translocation, and thus conserves the redox energy in a proton gradient. Cyanobacterial NDH-1 also plays a role in inorganic carbon-concentration. This chain is NAD(P)H-quinone oxidoreductase subunit H, found in Picosynechococcus sp. (strain ATCC 27264 / PCC 7002 / PR-6) (Agmenellum quadruplicatum).